Consider the following 822-residue polypeptide: Nuclear factor of activated T-cells, cytoplasmic 1 (822 aa).

The segment at 110–115 (PRIEIT) is calcineurin-binding. The transactivation domain A (TAD-A) stretch occupies residues 118-210 (LGLHHNNGQF…CVSPKTTDPE (93 aa)). Residues 192–206 (PQTSPWQSPCVSPKT) show a composition bias toward polar residues. A disordered region spans residues 192 to 289 (PQTSPWQSPC…HSSPRVSVTD (98 aa)). 2 repeat units span residues 195–211 (SPWQ…DPEE) and 225–241 (SPRH…VTEE). Residues 195 to 290 (SPWQSPCVSP…SSPRVSVTDD (96 aa)) form a 3 X SP repeats region. Phosphoserine occurs at positions 225 and 229. Over residues 225-242 (SPRHSPSTSPRTSVTEES) the composition is skewed to low complexity. Ser237 carries the phosphoserine; by PKA modification. A Nuclear localization signal motif is present at residues 257 to 259 (KRK). Repeat unit 3 spans residues 274-290 (SPTPSPHSSPRVSVTDD). Ser286 is subject to Phosphoserine; by PKA. Positions 302–313 (SAIVAAINALST) match the Nuclear export signal motif. One can recognise an RHD domain in the interval 400 to 582 (PSLPALDWQL…NPIECSQRSA (183 aa)). Residues 429–436 (RAHYETEG) mediate DNA binding. Residues 672 to 674 (KRK) carry the Nuclear localization signal motif. A disordered region spans residues 772–822 (GPGHLGLQRPAGGVLGGQEAPRPGGPHPGAPQLHPLNLSQSIVTRLTEPQP). Positions 808–822 (NLSQSIVTRLTEPQP) are enriched in polar residues.

Member of the multicomponent NFATC transcription complex that consists of at least two components, a pre-existing cytoplasmic component NFATC2 and an inducible nuclear component NFATC1. Other members such as NFATC4, NFATC3 or members of the activating protein-1 family, MAF, GATA4 and Cbp/p300 can also bind the complex. NFATC proteins bind to DNA as monomers. Interacts with HOMER2 and HOMER3; this interaction may compete with calcineurin/PPP3CA-binding and hence prevent NFATC1 dephosphorylation and activation. Interacts with TLE6/GRG6. Post-translationally, phosphorylated by NFATC-kinase and GSK3B; phosphorylation induces NFATC1 nuclear exit and dephosphorylation by calcineurin promotes nuclear import. Phosphorylation by PKA and DYRK2 negatively modulates nuclear accumulation, and promotes subsequent phosphorylation by GSK3B or casein kinase 1.

The protein resides in the cytoplasm. It localises to the nucleus. In terms of biological role, plays a role in the inducible expression of cytokine genes in T-cells, especially in the induction of the IL-2 or IL-4 gene transcription. Also controls gene expression in embryonic cardiac cells. Could regulate not only the activation and proliferation but also the differentiation and programmed death of T-lymphocytes as well as lymphoid and non-lymphoid cells. Required for osteoclastogenesis and regulates many genes important for osteoclast differentiation and function. The polypeptide is Nuclear factor of activated T-cells, cytoplasmic 1 (NFATC1) (Sus scrofa (Pig)).